Consider the following 67-residue polypeptide: Beta-defensin 14 (67 aa).

The N-terminal stretch at 1-22 (MRLHYLLFVFLILFLVPAPGDA) is a signal peptide. 3 cysteine pairs are disulfide-bonded: Cys33-Cys62, Cys40-Cys55, and Cys45-Cys63.

Belongs to the beta-defensin family.

Its subcellular location is the secreted. Functionally, has antibacterial activity. The sequence is that of Beta-defensin 14 (Defb14) from Mus musculus (Mouse).